Here is a 506-residue protein sequence, read N- to C-terminus: MRARCGRILSDSERVEADMDTGMGGMDFGTVDAVAGQVAGNLAVSEATIADLGYLRAQLAAAEVPFLLVRDRDHRLVLAADAAHRAMVRRVTAAAAAAGFVCTQPQPDVVRLGRDRDPAHHVELELWEYHGDTVECPRPNALTRTVFDLADVEFTEVRLFDRSWPTLAQMFAPQPTDVGFDIDIVFSWVDGSDPEFRARRAGMMAQVVVGEGDDADARIRQIDELKYALRSVHKNAPWIRRIFIATDSPAPAWLAEHPKVTIVRAIDHFSDTSGLPTFNSHAVESQLQHIEGLSEHFLYSNDDMFFARPVRPSMFFTPAGISRFIEADVRIGPGRNNERRSGYENAARVNRALLAERFGHVITRHLEHTPVPLRRSVLREMEEEFAADFARTRTSRFRAATDISVTNSLYHYYALLTGRAVPQEAARVAYVDTTSRAGLAVLDDIAAHRDLDFFCLNDGSFPEISESERVREVSRFLAGYFPDPAPWERVSAPSRRPLPESTAGAA.

A disordered region spans residues 484–506 (PAPWERVSAPSRRPLPESTAGAA).

This sequence belongs to the stealth family.

In Nocardia farcinica (strain IFM 10152), this protein is Exopolysaccharide phosphotransferase NFA_48680.